Reading from the N-terminus, the 168-residue chain is Ribosome maturation factor RimM (168 aa).

Residues 96-168 enclose the PRC barrel domain; it reads EDEYFITDLI…VMIVRLLEGL (73 aa).

This sequence belongs to the RimM family. As to quaternary structure, binds ribosomal protein uS19.

The protein localises to the cytoplasm. Its function is as follows. An accessory protein needed during the final step in the assembly of 30S ribosomal subunit, possibly for assembly of the head region. Essential for efficient processing of 16S rRNA. May be needed both before and after RbfA during the maturation of 16S rRNA. It has affinity for free ribosomal 30S subunits but not for 70S ribosomes. The sequence is that of Ribosome maturation factor RimM from Caldanaerobacter subterraneus subsp. tengcongensis (strain DSM 15242 / JCM 11007 / NBRC 100824 / MB4) (Thermoanaerobacter tengcongensis).